A 341-amino-acid polypeptide reads, in one-letter code: Dihydroorotate dehydrogenase (quinone) (341 aa).

Residues 61–65 and T85 contribute to the FMN site; that span reads AGLDK. K65 provides a ligand contact to substrate. Residue 110 to 114 coordinates substrate; it reads NRMGF. Residues N138 and N171 each contribute to the FMN site. Residue N171 participates in substrate binding. S174 functions as the Nucleophile in the catalytic mechanism. N176 contacts substrate. Residues K216 and T244 each coordinate FMN. Residue 245–246 coordinates substrate; it reads NT. Residues G267, G296, and 317–318 each bind FMN; that span reads YS.

The protein belongs to the dihydroorotate dehydrogenase family. Type 2 subfamily. As to quaternary structure, monomer. The cofactor is FMN.

The protein localises to the cell membrane. It carries out the reaction (S)-dihydroorotate + a quinone = orotate + a quinol. The protein operates within pyrimidine metabolism; UMP biosynthesis via de novo pathway; orotate from (S)-dihydroorotate (quinone route): step 1/1. In terms of biological role, catalyzes the conversion of dihydroorotate to orotate with quinone as electron acceptor. In Pseudomonas putida (strain GB-1), this protein is Dihydroorotate dehydrogenase (quinone).